The chain runs to 205 residues: Large ribosomal subunit protein uL3 (205 aa).

Residues 126 to 150 are disordered; that stretch reads GGPKTHGQSDRHRAPGSISSTTTPG.

Belongs to the universal ribosomal protein uL3 family. As to quaternary structure, part of the 50S ribosomal subunit. Forms a cluster with proteins L14 and L19.

Its function is as follows. One of the primary rRNA binding proteins, it binds directly near the 3'-end of the 23S rRNA, where it nucleates assembly of the 50S subunit. The chain is Large ribosomal subunit protein uL3 from Dehalococcoides mccartyi (strain ATCC BAA-2266 / KCTC 15142 / 195) (Dehalococcoides ethenogenes (strain 195)).